Consider the following 135-residue polypeptide: GNTYSANNKQQTDIEQLMPKYNSTFAKMNGNYSYKLIWDDSMVSDALQEAKEQYSTNATFKIRRRKVFIKGDNATMEEKVEGALKYPVLRADKFLRRLLWFTHYACNGYYDTKGGHDVLTVACLYREIDYKNSHY.

The signal sequence occupies residues 1–5 (GNTYS). 4 N-linked (GlcNAc...) asparagine glycosylation sites follow: N22, N31, N57, and N73.

This sequence to H.contortus 15 kDa excretory/secretory protein.

The protein localises to the secreted. The polypeptide is 30 kDa antigenic glycoprotein (Trichostrongylus colubriformis (Black scour worm)).